Here is a 617-residue protein sequence, read N- to C-terminus: Protein fem-1 homolog A (617 aa).

ANK repeat units lie at residues Asp2 to Ala32, Glu40 to Leu70, Glu82 to Asn111, Thr115 to Val144, His148 to Arg177, Lys181 to Arg210, and Tyr213 to Glu242. TPR repeat units lie at residues Ile245–Gly279 and Ser339–Asn372. 2 ANK repeats span residues Gly482–Ser524 and Asp528–Ala557.

Belongs to the fem-1 family. Component of a CRL2 E3 ubiquitin-protein ligase complex, also named ECS (Elongin BC-CUL2/5-SOCS-box protein) complex.

It is found in the mitochondrion. The protein localises to the cytoplasm. Its pathway is protein modification; protein ubiquitination. Substrate-recognition component of a Cul2-RING (CRL2) E3 ubiquitin-protein ligase complex of the DesCEND (destruction via C-end degrons) pathway, which recognizes a C-degron located at the extreme C terminus of target proteins, leading to their ubiquitination and degradation. The C-degron recognized by the DesCEND pathway is usually a motif of less than ten residues and can be present in full-length proteins, truncated proteins or proteolytically cleaved forms. The CRL2(FEM1A) complex specifically recognizes proteins with an arginine at the C-terminus: recognizes and binds proteins ending with -Lys/Arg-Xaa-Arg and -Lys/Arg-Xaa-Xaa-Arg C-degrons, leading to their ubiquitination and degradation. This chain is Protein fem-1 homolog A, found in Danio rerio (Zebrafish).